The sequence spans 394 residues: A-type flagellin (394 aa).

Belongs to the bacterial flagellin family. Phosphorylated on tyrosine residue(s). In terms of processing, flagellin from strain 5939 but not from strain 170018 is glycosylated.

The protein localises to the secreted. It localises to the bacterial flagellum. In terms of biological role, flagellin is the subunit protein which polymerizes to form the filaments of bacterial flagella. The chain is A-type flagellin (fliC) from Pseudomonas aeruginosa.